A 236-amino-acid chain; its full sequence is Small ribosomal subunit protein uS2c (236 aa).

This sequence belongs to the universal ribosomal protein uS2 family.

It is found in the plastid. The protein resides in the chloroplast. In Cucumis sativus (Cucumber), this protein is Small ribosomal subunit protein uS2c (rps2).